A 690-amino-acid polypeptide reads, in one-letter code: Subtilisin-like protease 1 (690 aa).

An N-terminal signal peptide occupies residues 1–25; sequence MMLNKKVVALCTLTLHLFCIFLCLG. A propeptide spans 26 to 219 (inhibition peptide); the sequence is KEVRSEENGK…IESDKLVSAD (194 aa). The interval 99 to 131 is disordered; the sequence is EKNKNDNHNNNNNNNNISSSSSSSSNTFGEEKE. Residues 106 to 124 show a composition bias toward low complexity; the sequence is HNNNNNNNNISSSSSSSSN. An N-linked (GlcNAc...) asparagine glycan is attached at asparagine 114. Ca(2+)-binding residues include asparagine 147, threonine 150, and proline 152. N-linked (GlcNAc...) asparagine glycosylation is present at asparagine 173. Residue glycine 207 participates in Ca(2+) binding. Asparagine 263 carries N-linked (GlcNAc...) asparagine glycosylation. Disordered regions lie at residues 266–286 and 305–334; these read HAATSKRKRHSTNERGYDTFS and NNNNYYYSHSSNGHNSSSRNSSSSRSRPGK. The segment covering 305 to 330 has biased composition (low complexity); it reads NNNNYYYSHSSNGHNSSSRNSSSSRS. Asparagine 319 and asparagine 324 each carry an N-linked (GlcNAc...) asparagine glycan. Ca(2+) is bound at residue glutamate 340. The Peptidase S8 domain occupies 345-663; sequence QWGLDLSRLD…AGYADINKAV (319 aa). Intrachain disulfides connect cysteine 371/cysteine 481 and cysteine 460/cysteine 477. The Charge relay system role is filled by aspartate 374. The Ca(2+) site is built by aspartate 383, glutamate 394, arginine 398, phenylalanine 401, aspartate 402, aspartate 403, aspartate 404, asparagine 406, isoleucine 408, aspartate 410, and aspartate 411. N-linked (GlcNAc...) asparagine glycosylation is present at asparagine 419. Residue histidine 430 is the Charge relay system of the active site. Isoleucine 441, asparagine 444, isoleucine 446, and valine 448 together coordinate Ca(2+). N-linked (GlcNAc...) asparagine glycosylation is found at asparagine 490, asparagine 503, and asparagine 522. Residues cysteine 523 and cysteine 536 are joined by a disulfide bond. A glycan (N-linked (GlcNAc...) asparagine) is linked at asparagine 605. The active-site Charge relay system is serine 608. N-linked (GlcNAc...) asparagine glycosylation is present at asparagine 677.

Belongs to the peptidase S8 family. In terms of assembly, heterodimer between p54 form and prodomain p31; the interaction inhibits p54 catalytic activity. Heterodimer p31-p54 is monomeric at basic pH and dimeric at acidic pH; dimerization is driven by the N-terminal prodomain (p31). Ca(2+) serves as cofactor. The prodomain (p31) is cleaved, probably by autocatalysis, during the transport to or in the Golgi apparatus, and remains non-covalently associated with the p54 form as an inhibitor. p54 is further cleaved into the p47 form. This cleavage is likely occurring in the exoneme prior to egress and is mediated by PMX/plasmepsin X. The p54-to-p47 conversion can be also autocatalytic. Heterodimer p31-p54 is activated by cleavage of prodomain (p31) by the aspartic protease PMX; cleavage by PMX abolishes inhibitory capacity of p31. Primary autocatalytic processing of SUB1 is essential for parasite growth; the p54-to-p47 conversion is dispensable for SUB1 functions in the parasites. In terms of processing, the disulfide bond between Cys-523 and Cys-536 acts as a redox-sensitive disulfide switch. The oxidized form is required for catalytic activity. Post-translationally, the relevance of N-glycosylation is not clear. In an insect expression system, SUB1 glycosylation appears to affect its processing into the active mature form suggesting that SUB1 may not be N-glycosylated in parasites.

The protein resides in the secreted. It localises to the parasitophorous vacuole lumen. The enzyme catalyses Hydrolysis of proteins with broad specificity for peptide bonds, and a preference for a large uncharged residue in P1. Hydrolyzes peptide amides.. Its activity is regulated as follows. p54 and probably p47 forms are inhibited by the non-covalent interaction with the cleaved propeptide. Inhibited by subtilisin propeptide-like protein SUB1-ProM. Inhibited by 3,4-dichloroisocoumarin (DCI) and 4-(hydroxymercuri)benzoic acid (pHMB). Partially inhibited by chymostatin, leupeptin, phenylmethylsulfonyl fluoride (PMSF), and 4-(2-aminoethyl)benzenesulfonyl fluoride. Serine protease which plays an essential role in merozoite invasion of and egress from host erythrocytes by processing and activating various merozoite surface and parasitophorous vacuole proteins. Mediates the proteolytic maturation of serine proteases SERA4, SERA5 and SERA6 just prior to merozoite egress. Prior to merozoite egress, cleaves merozoite surface proteins MSP1, MSP6 and MSP7, which form the MSP1/6/7 complex, and thereby may prime the parasite cell surface for invasion of fresh erythrocytes. Prior to merozoite egress, cleaves MSRP2 converting it to MSRP2 p25 form, and RAP1 converting it to RAP1 p67 form. The chain is Subtilisin-like protease 1 from Plasmodium falciparum.